A 652-amino-acid chain; its full sequence is DNA ligase (652 aa).

NAD(+) contacts are provided by residues 29-33, 78-79, and glutamate 107; these read DSDYD and SL. The active-site N6-AMP-lysine intermediate is the lysine 109. 4 residues coordinate NAD(+): arginine 130, glutamate 164, lysine 278, and lysine 302. The Zn(2+) site is built by cysteine 395, cysteine 398, cysteine 413, and cysteine 418. One can recognise a BRCT domain in the interval 577-652; sequence NSDAALFGLT…IEDEDWLRQL (76 aa).

The protein belongs to the NAD-dependent DNA ligase family. LigA subfamily. Mg(2+) is required as a cofactor. It depends on Mn(2+) as a cofactor.

The catalysed reaction is NAD(+) + (deoxyribonucleotide)n-3'-hydroxyl + 5'-phospho-(deoxyribonucleotide)m = (deoxyribonucleotide)n+m + AMP + beta-nicotinamide D-nucleotide.. In terms of biological role, DNA ligase that catalyzes the formation of phosphodiester linkages between 5'-phosphoryl and 3'-hydroxyl groups in double-stranded DNA using NAD as a coenzyme and as the energy source for the reaction. It is essential for DNA replication and repair of damaged DNA. The polypeptide is DNA ligase (Streptococcus pyogenes serotype M3 (strain ATCC BAA-595 / MGAS315)).